We begin with the raw amino-acid sequence, 299 residues long: Prohibitin-2 (299 aa).

The residue at position 2 (Ala2) is an N-acetylalanine. Positions 19–49 are necessary for transcriptional repression; it reads MGTALKLLLGAGAVAYGVRESVFTVEGGHRA. Tyr128 is subject to Phosphotyrosine. Lys147 is modified (N6-acetyllysine). The necessary for transcriptional repression stretch occupies residues 150 to 174; that stretch reads ASQLITQRAQVSLLIRRELTERAKD. Position 151 is a phosphoserine (Ser151). Residues 190–238 adopt a coiled-coil conformation; that stretch reads SREYTAAVEAKQVAQQEAQRAQFLVEKAKQEQRQKIVQAEGEAEAAKML. An N6-acetyllysine mark is found at Lys200, Lys236, Lys250, and Lys262.

It belongs to the prohibitin family. As to quaternary structure, the mitochondrial prohibitin complex consists of two subunits (PHB1 and PHB2), assembled into a membrane-associated ring-shaped supercomplex of approximately 1 mDa. Interacts with ESR1, HDAC1 and HDAC5. Interacts with ZNF703. Interacts with STOML2. Interacts with ARFGEF3. Interacts with SPHK2. Interacts with COX4I1; the interaction associates PHB2 with COX. Interacts with MAP1LC3B (membrane-bound form LC3-II); the interaction is direct and upon mitochondrial depolarization and proteasome-dependent outer membrane rupture. Interacts with IGFBP6 (via C-terminal domain). Interacts with CLPB. Interacts with CD86 (via cytoplasmic domain); the interactions increases after priming with CD40. Interacts with AFG3L2. Interacts with DNAJC19. Interacts with AKT2; this interaction may be important for myogenic differentiation. Phosphorylated. Tyrosine phosphorylation is indirectly stimulated by IGFBP6. In terms of tissue distribution, widely expressed in different tissues.

It localises to the mitochondrion inner membrane. Its subcellular location is the cytoplasm. It is found in the nucleus. The protein resides in the cell membrane. Protein with pleiotropic attributes mediated in a cell-compartment- and tissue-specific manner, which include the plasma membrane-associated cell signaling functions, mitochondrial chaperone, and transcriptional co-regulator of transcription factors and sex steroid hormones in the nucleus. Functionally, in the mitochondria, together with PHB, forms large ring complexes (prohibitin complexes) in the inner mitochondrial membrane (IMM) and functions as a chaperone protein that stabilizes mitochondrial respiratory enzymes and maintains mitochondrial integrity in the IMM, which is required for mitochondrial morphogenesis, neuronal survival, and normal lifespan. The prohibitin complex, with DNAJC19, regulates cardiolipin remodeling and the protein turnover of OMA1 in a cardiolipin-binding manner. Also regulates cytochrome-c oxidase assembly (COX) and mitochondrial respiration. Binding to sphingoid 1-phosphate (SPP) modulates its regulator activity. Has a key role of mitophagy receptor involved in targeting mitochondria for autophagic degradation. Involved in mitochondrial-mediated antiviral innate immunity, activates RIG-I-mediated signal transduction and production of IFNB1 and pro-inflammatory cytokine IL6. Its function is as follows. In the nucleus, serves as transcriptional co-regulator. Acts as a mediator of transcriptional repression by nuclear hormone receptors via recruitment of histone deacetylases. Functions as an estrogen receptor (ER)-selective coregulator that potentiates the inhibitory activities of antiestrogens and represses the activity of estrogens. Competes with NCOA1 for modulation of ER transcriptional activity. In terms of biological role, in the plasma membrane, is involved in IGFBP6-induced cell migration. Cooperates with CD86 to mediate CD86-signaling in B lymphocytes that regulates the level of IgG1 produced through the activation of distal signaling intermediates. Upon CD40 engagement, required to activate NF-kappa-B signaling pathway via phospholipase C and protein kinase C activation. The sequence is that of Prohibitin-2 from Mus musculus (Mouse).